The sequence spans 136 residues: Large ribosomal subunit protein uL16 (136 aa).

The protein belongs to the universal ribosomal protein uL16 family. As to quaternary structure, part of the 50S ribosomal subunit.

Binds 23S rRNA and is also seen to make contacts with the A and possibly P site tRNAs. In Buchnera aphidicola subsp. Acyrthosiphon pisum (strain 5A), this protein is Large ribosomal subunit protein uL16.